A 479-amino-acid polypeptide reads, in one-letter code: D-hydantoinase/dihydropyrimidinase (479 aa).

Zn(2+) contacts are provided by His-59, His-61, and Lys-150. The residue at position 150 (Lys-150) is an N6-carboxylysine. Tyr-155 contacts substrate. Zn(2+) is bound by residues His-183 and His-239. Ser-289 provides a ligand contact to substrate. Asp-316 is a binding site for Zn(2+). Asn-337 lines the substrate pocket.

This sequence belongs to the metallo-dependent hydrolases superfamily. Hydantoinase/dihydropyrimidinase family. In terms of assembly, homotetramer. Zn(2+) serves as cofactor. Post-translationally, carboxylation allows a single lysine to coordinate two zinc ions.

The enzyme catalyses 5,6-dihydrouracil + H2O = 3-(carbamoylamino)propanoate + H(+). Its function is as follows. Catalyzes the hydrolysis of dihydropyrimidines and of the structurally related DL-5-mono-substituted hydantoins, to produce N-carbamoyl-D-amino acids. In Pseudomonas aeruginosa (strain ATCC 15692 / DSM 22644 / CIP 104116 / JCM 14847 / LMG 12228 / 1C / PRS 101 / PAO1), this protein is D-hydantoinase/dihydropyrimidinase (dht).